The sequence spans 44 residues: Photosystem I reaction center subunit IX (44 aa).

The helical transmembrane segment at 7–27 (YLSVAPVLATLWFGSLAGLLI) threads the bilayer.

The protein belongs to the PsaJ family.

It is found in the plastid. It localises to the chloroplast thylakoid membrane. May help in the organization of the PsaE and PsaF subunits. This chain is Photosystem I reaction center subunit IX, found in Illicium oligandrum (Star anise).